A 183-amino-acid polypeptide reads, in one-letter code: SsrA-binding protein (183 aa).

The segment at 1-27 is disordered; that stretch reads MAKKATLVDHGAAKGKKKAQSKVSKKN. The span at 13–27 shows a compositional bias: basic residues; sequence AKGKKKAQSKVSKKN.

This sequence belongs to the SmpB family.

Its subcellular location is the cytoplasm. Required for rescue of stalled ribosomes mediated by trans-translation. Binds to transfer-messenger RNA (tmRNA), required for stable association of tmRNA with ribosomes. tmRNA and SmpB together mimic tRNA shape, replacing the anticodon stem-loop with SmpB. tmRNA is encoded by the ssrA gene; the 2 termini fold to resemble tRNA(Ala) and it encodes a 'tag peptide', a short internal open reading frame. During trans-translation Ala-aminoacylated tmRNA acts like a tRNA, entering the A-site of stalled ribosomes, displacing the stalled mRNA. The ribosome then switches to translate the ORF on the tmRNA; the nascent peptide is terminated with the 'tag peptide' encoded by the tmRNA and targeted for degradation. The ribosome is freed to recommence translation, which seems to be the essential function of trans-translation. The protein is SsrA-binding protein of Corynebacterium kroppenstedtii (strain DSM 44385 / JCM 11950 / CIP 105744 / CCUG 35717).